We begin with the raw amino-acid sequence, 409 residues long: Probable aspartate/prephenate aminotransferase (409 aa).

Residues Gly-39, Trp-125, and Asn-175 each coordinate L-aspartate. The residue at position 239 (Lys-239) is an N6-(pyridoxal phosphate)lysine. Arg-375 is a binding site for L-aspartate.

It belongs to the class-I pyridoxal-phosphate-dependent aminotransferase family. In terms of assembly, homodimer. Pyridoxal 5'-phosphate serves as cofactor.

The protein resides in the cytoplasm. The catalysed reaction is L-aspartate + 2-oxoglutarate = oxaloacetate + L-glutamate. The enzyme catalyses L-arogenate + 2-oxoglutarate = prephenate + L-glutamate. Its function is as follows. Catalyzes the reversible conversion of aspartate and 2-oxoglutarate to glutamate and oxaloacetate. Can also transaminate prephenate in the presence of glutamate. The chain is Probable aspartate/prephenate aminotransferase (aatA) from Rickettsia felis (strain ATCC VR-1525 / URRWXCal2) (Rickettsia azadi).